We begin with the raw amino-acid sequence, 288 residues long: 4-diphosphocytidyl-2-C-methyl-D-erythritol kinase (288 aa).

Lys10 is a catalytic residue. An ATP-binding site is contributed by 94–104 (PVAAGLGGGSS). The active site involves Asp136.

The protein belongs to the GHMP kinase family. IspE subfamily.

It catalyses the reaction 4-CDP-2-C-methyl-D-erythritol + ATP = 4-CDP-2-C-methyl-D-erythritol 2-phosphate + ADP + H(+). It functions in the pathway isoprenoid biosynthesis; isopentenyl diphosphate biosynthesis via DXP pathway; isopentenyl diphosphate from 1-deoxy-D-xylulose 5-phosphate: step 3/6. In terms of biological role, catalyzes the phosphorylation of the position 2 hydroxy group of 4-diphosphocytidyl-2C-methyl-D-erythritol. In Lactiplantibacillus plantarum (strain ATCC BAA-793 / NCIMB 8826 / WCFS1) (Lactobacillus plantarum), this protein is 4-diphosphocytidyl-2-C-methyl-D-erythritol kinase.